The sequence spans 195 residues: Putative NADH dehydrogenase/NAD(P)H nitroreductase Bcep18194_B1060 (195 aa).

The protein belongs to the nitroreductase family. HadB/RutE subfamily. FMN is required as a cofactor.

This is Putative NADH dehydrogenase/NAD(P)H nitroreductase Bcep18194_B1060 from Burkholderia lata (strain ATCC 17760 / DSM 23089 / LMG 22485 / NCIMB 9086 / R18194 / 383).